A 36-amino-acid polypeptide reads, in one-letter code: Photosystem I reaction center subunit VIII (36 aa).

The chain crosses the membrane as a helical span at residues 6–28; sequence LPSIFVPLIGLFFPAIAMASLFL.

It belongs to the PsaI family.

It is found in the plastid. The protein resides in the chloroplast thylakoid membrane. Its function is as follows. May help in the organization of the PsaL subunit. In Amborella trichopoda, this protein is Photosystem I reaction center subunit VIII.